A 539-amino-acid chain; its full sequence is Chaperonin GroEL (539 aa).

ATP is bound by residues 29–32 (TLGP), 86–90 (DGTTT), glycine 413, 477–479 (DAL), and aspartate 493.

Belongs to the chaperonin (HSP60) family. Forms a cylinder of 14 subunits composed of two heptameric rings stacked back-to-back. Interacts with the co-chaperonin GroES.

It localises to the cytoplasm. The enzyme catalyses ATP + H2O + a folded polypeptide = ADP + phosphate + an unfolded polypeptide.. Functionally, together with its co-chaperonin GroES, plays an essential role in assisting protein folding. The GroEL-GroES system forms a nano-cage that allows encapsulation of the non-native substrate proteins and provides a physical environment optimized to promote and accelerate protein folding. The chain is Chaperonin GroEL from Clostridium perfringens (strain 13 / Type A).